The primary structure comprises 153 residues: Transcriptional repressor NrdR (153 aa).

The interval 1 to 20 (MKCPFCNSADTRVKNSRHSD) is disordered. The segment at 3–34 (CPFCNSADTRVKNSRHSDDNMSVRRRRLCEVC) is a zinc-finger region. A compositionally biased stretch (basic and acidic residues) spans 11 to 20 (TRVKNSRHSD). One can recognise an ATP-cone domain in the interval 49 to 139 (IMVLKKDGRM…VYMDFSDADD (91 aa)).

This sequence belongs to the NrdR family. Zn(2+) serves as cofactor.

In terms of biological role, negatively regulates transcription of bacterial ribonucleotide reductase nrd genes and operons by binding to NrdR-boxes. The protein is Transcriptional repressor NrdR of Anaplasma phagocytophilum (strain HZ).